A 63-amino-acid polypeptide reads, in one-letter code: Conotoxin p5a (63 aa).

Residues 1–19 (MRCLPVFVILLLLIPSAPC) form the signal peptide. A propeptide spanning residues 20-50 (VDAHPKTKDDMPLASFHDNAKGTLQRFWKKR) is cleaved from the precursor. Disulfide bonds link Cys52-Cys59 and Cys53-Cys60. Leu62 carries the leucine amide modification.

As to expression, expressed by the venom duct.

It is found in the secreted. Functionally, in vivo, low levels of the peptide injected into male specimens of the Siamese fighting fish causes an immediate aggressive display in this fish in response to their reflection when placed in a mirrored aquarium; High levels of the peptide suppressed this behavior. No effect is observed when injected into mice. The protein is Conotoxin p5a of Conus purpurascens (Purple cone).